The primary structure comprises 106 residues: Large ribosomal subunit protein uL24 (106 aa).

It belongs to the universal ribosomal protein uL24 family. Part of the 50S ribosomal subunit.

One of two assembly initiator proteins, it binds directly to the 5'-end of the 23S rRNA, where it nucleates assembly of the 50S subunit. Its function is as follows. One of the proteins that surrounds the polypeptide exit tunnel on the outside of the subunit. The protein is Large ribosomal subunit protein uL24 of Clostridium acetobutylicum (strain ATCC 824 / DSM 792 / JCM 1419 / IAM 19013 / LMG 5710 / NBRC 13948 / NRRL B-527 / VKM B-1787 / 2291 / W).